Here is a 331-residue protein sequence, read N- to C-terminus: Ferrochelatase (331 aa).

The Fe cation site is built by His187 and Glu286.

This sequence belongs to the ferrochelatase family.

The protein localises to the cytoplasm. The enzyme catalyses heme b + 2 H(+) = protoporphyrin IX + Fe(2+). It participates in porphyrin-containing compound metabolism; protoheme biosynthesis; protoheme from protoporphyrin-IX: step 1/1. In terms of biological role, catalyzes the ferrous insertion into protoporphyrin IX. This is Ferrochelatase from Legionella pneumophila (strain Corby).